The primary structure comprises 111 residues: Universal stress protein B (111 aa).

2 helical membrane passes run 1–21 (MIST…NMAR) and 90–110 (FILT…LMLW).

The protein belongs to the universal stress protein B family.

It localises to the cell inner membrane. In Yersinia pseudotuberculosis serotype O:1b (strain IP 31758), this protein is Universal stress protein B.